The sequence spans 289 residues: S-methyl-5'-thioadenosine phosphorylase (289 aa).

Residues Ser-24, 66–67 (RH), and 99–100 (TA) each bind phosphate. Met-202 lines the substrate pocket. Thr-203 is a phosphate binding site. Residue 226–228 (DYD) participates in substrate binding.

Belongs to the PNP/MTAP phosphorylase family. MTAP subfamily. In terms of assembly, homotrimer.

The protein localises to the cytoplasm. It is found in the nucleus. It carries out the reaction S-methyl-5'-thioadenosine + phosphate = 5-(methylsulfanyl)-alpha-D-ribose 1-phosphate + adenine. It participates in amino-acid biosynthesis; L-methionine biosynthesis via salvage pathway; S-methyl-5-thio-alpha-D-ribose 1-phosphate from S-methyl-5'-thioadenosine (phosphorylase route): step 1/1. Catalyzes the reversible phosphorylation of S-methyl-5'-thioadenosine (MTA) to adenine and 5-methylthioribose-1-phosphate. Involved in the breakdown of MTA, a major by-product of polyamine biosynthesis. Responsible for the first step in the methionine salvage pathway after MTA has been generated from S-adenosylmethionine. Has broad substrate specificity with 6-aminopurine nucleosides as preferred substrates. In Drosophila pseudoobscura pseudoobscura (Fruit fly), this protein is S-methyl-5'-thioadenosine phosphorylase.